The primary structure comprises 98 residues: NADH-ubiquinone oxidoreductase chain 4L (98 aa).

3 helical membrane passes run 2–22, 29–49, and 61–81; these read PSIS…MLIF, SLLC…LTIL, and ILLL…LVTV.

The protein belongs to the complex I subunit 4L family. In terms of assembly, core subunit of respiratory chain NADH dehydrogenase (Complex I) which is composed of 45 different subunits.

Its subcellular location is the mitochondrion inner membrane. The enzyme catalyses a ubiquinone + NADH + 5 H(+)(in) = a ubiquinol + NAD(+) + 4 H(+)(out). Core subunit of the mitochondrial membrane respiratory chain NADH dehydrogenase (Complex I) which catalyzes electron transfer from NADH through the respiratory chain, using ubiquinone as an electron acceptor. Part of the enzyme membrane arm which is embedded in the lipid bilayer and involved in proton translocation. In Hapalemur aureus (Golden bamboo lemur), this protein is NADH-ubiquinone oxidoreductase chain 4L (MT-ND4L).